Consider the following 472-residue polypeptide: 3-isopropylmalate dehydratase large subunit (472 aa).

C353, C414, and C417 together coordinate [4Fe-4S] cluster.

The protein belongs to the aconitase/IPM isomerase family. LeuC type 1 subfamily. As to quaternary structure, heterodimer of LeuC and LeuD. [4Fe-4S] cluster serves as cofactor.

The catalysed reaction is (2R,3S)-3-isopropylmalate = (2S)-2-isopropylmalate. It participates in amino-acid biosynthesis; L-leucine biosynthesis; L-leucine from 3-methyl-2-oxobutanoate: step 2/4. Functionally, catalyzes the isomerization between 2-isopropylmalate and 3-isopropylmalate, via the formation of 2-isopropylmaleate. The chain is 3-isopropylmalate dehydratase large subunit from Acinetobacter baumannii (strain ATCC 17978 / DSM 105126 / CIP 53.77 / LMG 1025 / NCDC KC755 / 5377).